A 443-amino-acid chain; its full sequence is ATP-dependent protease ATPase subunit HslU (443 aa).

Residues Ile-18, 60-65, Asp-256, Glu-321, and Arg-393 contribute to the ATP site; that span reads GVGKTE.

Belongs to the ClpX chaperone family. HslU subfamily. In terms of assembly, a double ring-shaped homohexamer of HslV is capped on each side by a ring-shaped HslU homohexamer. The assembly of the HslU/HslV complex is dependent on binding of ATP.

It is found in the cytoplasm. ATPase subunit of a proteasome-like degradation complex; this subunit has chaperone activity. The binding of ATP and its subsequent hydrolysis by HslU are essential for unfolding of protein substrates subsequently hydrolyzed by HslV. HslU recognizes the N-terminal part of its protein substrates and unfolds these before they are guided to HslV for hydrolysis. This chain is ATP-dependent protease ATPase subunit HslU, found in Shigella boydii serotype 18 (strain CDC 3083-94 / BS512).